Here is a 357-residue protein sequence, read N- to C-terminus: sn-glycerol-3-phosphate import ATP-binding protein UgpC (357 aa).

An ABC transporter domain is found at 4-235 (LKLQAVTKSY…PASLFVASFI (232 aa)). 37 to 44 (GPSGCGKS) lines the ATP pocket.

This sequence belongs to the ABC transporter superfamily. sn-glycerol-3-phosphate importer (TC 3.A.1.1.3) family. The complex is composed of two ATP-binding proteins (UgpC), two transmembrane proteins (UgpA and UgpE) and a solute-binding protein (UgpB).

Its subcellular location is the cell inner membrane. The catalysed reaction is sn-glycerol 3-phosphate(out) + ATP + H2O = sn-glycerol 3-phosphate(in) + ADP + phosphate + H(+). Part of the ABC transporter complex UgpBAEC involved in sn-glycerol-3-phosphate (G3P) import. Responsible for energy coupling to the transport system. This chain is sn-glycerol-3-phosphate import ATP-binding protein UgpC, found in Pectobacterium atrosepticum (strain SCRI 1043 / ATCC BAA-672) (Erwinia carotovora subsp. atroseptica).